Here is a 325-residue protein sequence, read N- to C-terminus: tRNA pseudouridine synthase B (325 aa).

The active-site Nucleophile is D49.

The protein belongs to the pseudouridine synthase TruB family. Type 1 subfamily.

It catalyses the reaction uridine(55) in tRNA = pseudouridine(55) in tRNA. Functionally, responsible for synthesis of pseudouridine from uracil-55 in the psi GC loop of transfer RNAs. This is tRNA pseudouridine synthase B from Mesorhizobium japonicum (strain LMG 29417 / CECT 9101 / MAFF 303099) (Mesorhizobium loti (strain MAFF 303099)).